A 658-amino-acid polypeptide reads, in one-letter code: ATP-dependent zinc metalloprotease FtsH 4 (658 aa).

Residues 1 to 22 are disordered; that stretch reads MREPTNRQGSPGPGEPRPPAQG. Over 1-28 the chain is Cytoplasmic; that stretch reads MREPTNRQGSPGPGEPRPPAQGRPRFPT. Residues 29-49 traverse the membrane as a helical segment; it reads WILWVALLALALWNVYTFFWP. The Extracellular portion of the chain corresponds to 50 to 149; that stretch reads SSGARLNIPY…TVKIDQAGGS (100 aa). Positions 95-114 are disordered; the sequence is QVLSPGDPVPPGTSPNEIRT. Residues 150–170 traverse the membrane as a helical segment; it reads VWPSLLATIVPLFLFIGLMVY. Topologically, residues 171-658 are cytoplasmic; that stretch reads LGRSMSRGQQ…AAPAAAADSV (488 aa). 243-250 contacts ATP; the sequence is GPPGTGKT. Residue histidine 464 coordinates Zn(2+). Residue glutamate 465 is part of the active site. The Zn(2+) site is built by histidine 468 and aspartate 540.

It in the central section; belongs to the AAA ATPase family. In the C-terminal section; belongs to the peptidase M41 family. In terms of assembly, homohexamer. The cofactor is Zn(2+).

The protein resides in the cell membrane. Functionally, acts as a processive, ATP-dependent zinc metallopeptidase for both cytoplasmic and membrane proteins. Plays a role in the quality control of integral membrane proteins. The sequence is that of ATP-dependent zinc metalloprotease FtsH 4 (ftsh4) from Sphaerobacter thermophilus (strain ATCC 49802 / DSM 20745 / KCCM 41009 / NCIMB 13125 / S 6022).